Here is a 430-residue protein sequence, read N- to C-terminus: Evolutionarily conserved signaling intermediate in Toll pathway, mitochondrial (430 aa).

The N-terminal 48 residues, 1–48, are a transit peptide targeting the mitochondrion; the sequence is MSWVQATLLARGLCRAWGGICRAALPGTSISQVPRQLPRGLHCSAAPH. The tract at residues 41–66 is disordered; the sequence is LHCSAAPHSSEQSLVSSPPEPRQRPT. Polar residues predominate over residues 47 to 56; that stretch reads PHSSEQSLVS. Lys372 participates in a covalent cross-link: Glycyl lysine isopeptide (Lys-Gly) (interchain with G-Cter in ubiquitin). The segment at 400–430 is disordered; the sequence is LHTSSAGLEEPPPPEDHEEDDSRQRQQQGQS. The span at 411–420 shows a compositional bias: acidic residues; that stretch reads PPPEDHEEDD.

The protein belongs to the ECSIT family. Interacts with MAP3K1, SMAD4 and TRAF6. Interacts with SMAD1 only after BMP4-treatment. Part of the mitochondrial complex I assembly/MCIA complex that comprises at least the core subunits TMEM126B, NDUFAF1, ECSIT and ACAD9 and complement subunits such as COA1 and TMEM186. Interacts with NDUFAF1. Interacts with ACAD9. Interacts with TRIM59. Interacts with TMEM70 and TMEM242. Interacts (when ubiquitinated) with NF-kappa-B subunits RELA and NFKB1. Interacts with RIGI, IFIT1 and MAVS; these interactions promote RLR-mediated type I IFN induction. Interacts with SQSTM1; this interaction inhibits TLR4 signaling via functional regulation of the TRAF6-ECSIT complex. Interacts with cereblon/CRBN; this interaction inhibits the ubiquitination of ECSIT. In terms of processing, ubiquitinated on Lys-372; leading to translocation in the nucleus together with RELA and NFKB1 and expression of NF-kappa-B-dependent genes.

It localises to the cytoplasm. Its subcellular location is the nucleus. It is found in the mitochondrion. Functionally, adapter protein that plays a role in different signaling pathways including TLRs and IL-1 pathways or innate antiviral induction signaling. Plays a role in the activation of NF-kappa-B by forming a signal complex with TRAF6 and TAK1/MAP3K7 to activate TAK1/MAP3K7 leading to activation of IKKs. Once ubiquitinated, interacts with the dissociated RELA and NFKB1 proteins and translocates to the nucleus where it induces NF-kappa-B-dependent gene expression. Plays a role in innate antiviral immune response by bridging the pattern recognition receptors RIGI and MDA5/IFIT1 to the MAVS complex at the mitochondrion. Promotes proteolytic activation of MAP3K1. Involved in the BMP signaling pathway. Required for normal embryonic development. In terms of biological role, as part of the MCIA complex, involved in the assembly of the mitochondrial complex I. This chain is Evolutionarily conserved signaling intermediate in Toll pathway, mitochondrial, found in Macaca fascicularis (Crab-eating macaque).